The sequence spans 470 residues: UDP-N-acetylmuramoylalanine--D-glutamate ligase (470 aa).

Gly121–Thr127 is a binding site for ATP.

The protein belongs to the MurCDEF family.

Its subcellular location is the cytoplasm. It catalyses the reaction UDP-N-acetyl-alpha-D-muramoyl-L-alanine + D-glutamate + ATP = UDP-N-acetyl-alpha-D-muramoyl-L-alanyl-D-glutamate + ADP + phosphate + H(+). Its pathway is cell wall biogenesis; peptidoglycan biosynthesis. Cell wall formation. Catalyzes the addition of glutamate to the nucleotide precursor UDP-N-acetylmuramoyl-L-alanine (UMA). In Rhizobium johnstonii (strain DSM 114642 / LMG 32736 / 3841) (Rhizobium leguminosarum bv. viciae), this protein is UDP-N-acetylmuramoylalanine--D-glutamate ligase.